The primary structure comprises 361 residues: Phospho-N-acetylmuramoyl-pentapeptide-transferase (361 aa).

10 helical membrane-spanning segments follow: residues 25–45 (RAVM…PWVI), 73–93 (TMGG…WADL), 97–117 (YVWL…YDDW), 132–152 (FKMA…IATA), 167–187 (TVAY…VIVG), 200–220 (GLAA…AYVA), 240–260 (VVVF…FNAY), 264–284 (VFMG…VAVI), 289–309 (IVLF…MIQV), and 338–358 (QVVV…LSTL).

The protein belongs to the glycosyltransferase 4 family. MraY subfamily. It depends on Mg(2+) as a cofactor.

The protein localises to the cell inner membrane. It carries out the reaction UDP-N-acetyl-alpha-D-muramoyl-L-alanyl-gamma-D-glutamyl-meso-2,6-diaminopimeloyl-D-alanyl-D-alanine + di-trans,octa-cis-undecaprenyl phosphate = di-trans,octa-cis-undecaprenyl diphospho-N-acetyl-alpha-D-muramoyl-L-alanyl-D-glutamyl-meso-2,6-diaminopimeloyl-D-alanyl-D-alanine + UMP. The protein operates within cell wall biogenesis; peptidoglycan biosynthesis. Functionally, catalyzes the initial step of the lipid cycle reactions in the biosynthesis of the cell wall peptidoglycan: transfers peptidoglycan precursor phospho-MurNAc-pentapeptide from UDP-MurNAc-pentapeptide onto the lipid carrier undecaprenyl phosphate, yielding undecaprenyl-pyrophosphoryl-MurNAc-pentapeptide, known as lipid I. This Chromobacterium violaceum (strain ATCC 12472 / DSM 30191 / JCM 1249 / CCUG 213 / NBRC 12614 / NCIMB 9131 / NCTC 9757 / MK) protein is Phospho-N-acetylmuramoyl-pentapeptide-transferase.